A 349-amino-acid polypeptide reads, in one-letter code: Hydroxymethylglutaryl-CoA synthase (349 aa).

Asp-29 lines the (3S)-3-hydroxy-3-methylglutaryl-CoA pocket. Residue Glu-81 is the Proton donor/acceptor of the active site. Residues Cys-113, Ser-154, Thr-202, and His-235 each coordinate (3S)-3-hydroxy-3-methylglutaryl-CoA. Cys-113 functions as the Acyl-thioester intermediate in the catalytic mechanism. His-235 acts as the Proton donor/acceptor in catalysis. Arg-240 is a CoA binding site. (3S)-3-hydroxy-3-methylglutaryl-CoA is bound by residues Arg-244, Asn-267, and Ser-297.

Belongs to the thiolase-like superfamily. Archaeal HMG-CoA synthase family. As to quaternary structure, interacts with acetoacetyl-CoA thiolase that catalyzes the precedent step in the pathway and with a DUF35 protein. The acetoacetyl-CoA thiolase/HMG-CoA synthase complex channels the intermediate via a fused CoA-binding site, which allows for efficient coupling of the endergonic thiolase reaction with the exergonic HMGCS reaction.

It catalyses the reaction acetoacetyl-CoA + acetyl-CoA + H2O = (3S)-3-hydroxy-3-methylglutaryl-CoA + CoA + H(+). The protein operates within metabolic intermediate biosynthesis; (R)-mevalonate biosynthesis; (R)-mevalonate from acetyl-CoA: step 2/3. Its function is as follows. Catalyzes the condensation of acetyl-CoA with acetoacetyl-CoA to form 3-hydroxy-3-methylglutaryl-CoA (HMG-CoA). Functions in the mevalonate (MVA) pathway leading to isopentenyl diphosphate (IPP), a key precursor for the biosynthesis of isoprenoid compounds that are building blocks of archaeal membrane lipids. The polypeptide is Hydroxymethylglutaryl-CoA synthase (Pyrobaculum arsenaticum (strain DSM 13514 / JCM 11321 / PZ6)).